The primary structure comprises 177 residues: Peptide deformylase (177 aa).

Fe cation contacts are provided by Cys-99 and His-141. Residue Glu-142 is part of the active site. His-145 serves as a coordination point for Fe cation.

Belongs to the polypeptide deformylase family. The cofactor is Fe(2+).

It carries out the reaction N-terminal N-formyl-L-methionyl-[peptide] + H2O = N-terminal L-methionyl-[peptide] + formate. Its function is as follows. Removes the formyl group from the N-terminal Met of newly synthesized proteins. Requires at least a dipeptide for an efficient rate of reaction. N-terminal L-methionine is a prerequisite for activity but the enzyme has broad specificity at other positions. The sequence is that of Peptide deformylase from Rhizorhabdus wittichii (strain DSM 6014 / CCUG 31198 / JCM 15750 / NBRC 105917 / EY 4224 / RW1) (Sphingomonas wittichii).